The following is a 209-amino-acid chain: Imidazoleglycerol-phosphate dehydratase (209 aa).

Belongs to the imidazoleglycerol-phosphate dehydratase family.

Its subcellular location is the cytoplasm. It carries out the reaction D-erythro-1-(imidazol-4-yl)glycerol 3-phosphate = 3-(imidazol-4-yl)-2-oxopropyl phosphate + H2O. The protein operates within amino-acid biosynthesis; L-histidine biosynthesis; L-histidine from 5-phospho-alpha-D-ribose 1-diphosphate: step 6/9. The protein is Imidazoleglycerol-phosphate dehydratase of Nostoc sp. (strain PCC 7120 / SAG 25.82 / UTEX 2576).